Consider the following 505-residue polypeptide: Glycerol kinase (505 aa).

Position 14 (Thr-14) interacts with ADP. ATP-binding residues include Thr-14, Thr-15, and Ser-16. Thr-14 contacts sn-glycerol 3-phosphate. Position 18 (Arg-18) interacts with ADP. Sn-glycerol 3-phosphate-binding residues include Arg-84, Glu-85, Tyr-136, and Asp-246. Glycerol contacts are provided by Arg-84, Glu-85, Tyr-136, Asp-246, and Gln-247. ADP-binding residues include Thr-268 and Gly-311. The ATP site is built by Thr-268, Gly-311, Gln-315, and Gly-412. 2 residues coordinate ADP: Gly-412 and Asn-416.

Belongs to the FGGY kinase family.

The catalysed reaction is glycerol + ATP = sn-glycerol 3-phosphate + ADP + H(+). It participates in polyol metabolism; glycerol degradation via glycerol kinase pathway; sn-glycerol 3-phosphate from glycerol: step 1/1. Its activity is regulated as follows. Inhibited by fructose 1,6-bisphosphate (FBP). Functionally, key enzyme in the regulation of glycerol uptake and metabolism. Catalyzes the phosphorylation of glycerol to yield sn-glycerol 3-phosphate. The sequence is that of Glycerol kinase from Vibrio campbellii (strain ATCC BAA-1116).